The following is a 306-amino-acid chain: Ribonuclease Z (306 aa).

Residues H63, H65, D67, H68, H141, D211, and H269 each coordinate Zn(2+). D67 serves as the catalytic Proton acceptor.

Belongs to the RNase Z family. Homodimer. Requires Zn(2+) as cofactor.

The catalysed reaction is Endonucleolytic cleavage of RNA, removing extra 3' nucleotides from tRNA precursor, generating 3' termini of tRNAs. A 3'-hydroxy group is left at the tRNA terminus and a 5'-phosphoryl group is left at the trailer molecule.. Functionally, zinc phosphodiesterase, which displays some tRNA 3'-processing endonuclease activity. Probably involved in tRNA maturation, by removing a 3'-trailer from precursor tRNA. The protein is Ribonuclease Z of Staphylococcus haemolyticus (strain JCSC1435).